The primary structure comprises 563 residues: Arginine--tRNA ligase (563 aa).

The 'HIGH' region signature appears at 121–131; sequence PNIAKPFSIGH.

The protein belongs to the class-I aminoacyl-tRNA synthetase family. As to quaternary structure, monomer.

The protein localises to the cytoplasm. It carries out the reaction tRNA(Arg) + L-arginine + ATP = L-arginyl-tRNA(Arg) + AMP + diphosphate. The sequence is that of Arginine--tRNA ligase from Streptococcus pneumoniae (strain CGSP14).